The sequence spans 139 residues: Self-incompatibility protein S1 (139 aa).

The signal sequence occupies residues 1–19 (MNIFYVIVLLSFFLSKSSG). N51 is a glycosylation site (N-linked (GlcNAc...) asparagine).

Belongs to the plant self-incompatibility (S1) protein family. Post-translationally, glycosylated (S1b) and unglocosylated (S1a) forms coexist. Accumulates in the stigma (at protein level).

It is found in the secreted. In terms of biological role, exhibits specific pollen self-inhibitory activity thus preventing self-fertilization. The polypeptide is Self-incompatibility protein S1 (Papaver rhoeas (Common poppy)).